The chain runs to 82 residues: Delta-actitoxin-Aeq2b 1 (82 aa).

An N-terminal signal peptide occupies residues 1 to 19 (MNRLMILVFAAVILALASA). Residues 20–26 (DEDVDIA) constitute a propeptide that is removed on maturation. 3 disulfide bridges follow: Cys-32–Cys-79, Cys-34–Cys-69, and Cys-62–Cys-80.

This sequence belongs to the sea anemone sodium channel inhibitory toxin family. Type I subfamily.

The protein localises to the secreted. It is found in the nematocyst. In terms of biological role, binds specifically to voltage-gated sodium channels (Nav), thereby delaying their inactivation during signal transduction. Causes death to crabs. The polypeptide is Delta-actitoxin-Aeq2b 1 (Actinia equina (Beadlet anemone)).